Consider the following 266-residue polypeptide: MRLIPLVTAEQVGKWAARHIVNRINAFKPTADRPFVLGLPTGGTPLTAYKALVEMHKAGQVSFKHVVTFNMDEYVGLPKEHPESYHSFMHRNFFDHVDIPAENINLLNGNAPDIDAECRRYEEKIRSYGKIHLFMGGVGNDGHIAFNEPASSLASRTRIKTLTHDTRVANSRFFDGDVDLVPKYALTVGVGTLLDAEEVMILVLGHQKALALQAAVEGNVNHMWTITCLQLHPKAVIVCDEPSTMELKVKTLKYFNELEAENIKGL.

Residue Asp72 is the Proton acceptor; for enolization step of the active site. Asp141 functions as the For ring-opening step in the catalytic mechanism. Catalysis depends on His143, which acts as the Proton acceptor; for ring-opening step. Catalysis depends on Glu148, which acts as the For ring-opening step.

The protein belongs to the glucosamine/galactosamine-6-phosphate isomerase family. NagB subfamily. In terms of assembly, homohexamer.

The enzyme catalyses alpha-D-glucosamine 6-phosphate + H2O = beta-D-fructose 6-phosphate + NH4(+). The protein operates within amino-sugar metabolism; N-acetylneuraminate degradation; D-fructose 6-phosphate from N-acetylneuraminate: step 5/5. Allosterically activated by N-acetylglucosamine 6-phosphate (GlcNAc6P). Catalyzes the reversible isomerization-deamination of glucosamine 6-phosphate (GlcN6P) to form fructose 6-phosphate (Fru6P) and ammonium ion. The protein is Glucosamine-6-phosphate deaminase of Klebsiella pneumoniae (strain 342).